The sequence spans 167 residues: Methylated-DNA--protein-cysteine methyltransferase (167 aa).

Cys128 acts as the Nucleophile; methyl group acceptor in catalysis.

This sequence belongs to the MGMT family.

It is found in the cytoplasm. It carries out the reaction a 6-O-methyl-2'-deoxyguanosine in DNA + L-cysteinyl-[protein] = S-methyl-L-cysteinyl-[protein] + a 2'-deoxyguanosine in DNA. The catalysed reaction is a 4-O-methyl-thymidine in DNA + L-cysteinyl-[protein] = a thymidine in DNA + S-methyl-L-cysteinyl-[protein]. Involved in the cellular defense against the biological effects of O6-methylguanine (O6-MeG) and O4-methylthymine (O4-MeT) in DNA. Repairs the methylated nucleobase in DNA by stoichiometrically transferring the methyl group to a cysteine residue in the enzyme. This is a suicide reaction: the enzyme is irreversibly inactivated. The polypeptide is Methylated-DNA--protein-cysteine methyltransferase (Methanocaldococcus jannaschii (strain ATCC 43067 / DSM 2661 / JAL-1 / JCM 10045 / NBRC 100440) (Methanococcus jannaschii)).